A 582-amino-acid chain; its full sequence is Calcium-dependent protein kinase 24 (582 aa).

Positions 1–36 (MGSCVSSPLKGSPFGKRPVRRRHSSNSRTSSVPRFD) are disordered. Glycine 2 carries the N-myristoyl glycine lipid modification. A Protein kinase domain is found at 66–324 (YDLGKELGRG…VQEVLEHPWI (259 aa)). ATP contacts are provided by residues 72–80 (LGRGEFGVT) and lysine 95. The Proton acceptor role is filled by aspartate 190. At serine 230 the chain carries Phosphoserine. Positions 330-360 (APNVNLGDNVRTKIQQFLLMNRFKKKVLRIV) are autoinhibitory domain. EF-hand domains follow at residues 367–402 (EEIA…IGQV), 403–438 (VPDG…LKRM), 439–474 (GCDE…DKLG), and 478–513 (GNDQ…GTDW). The Ca(2+) site is built by aspartate 380, aspartate 382, asparagine 384, histidine 386, glutamate 391, aspartate 416, aspartate 418, asparagine 420, methionine 422, glutamate 427, aspartate 452, asparagine 454, asparagine 456, glutamate 463, aspartate 491, asparagine 493, aspartate 495, and arginine 497. Serine 499 bears the Phosphoserine mark. Position 502 (glutamate 502) interacts with Ca(2+).

The protein belongs to the protein kinase superfamily. Ser/Thr protein kinase family. CDPK subfamily.

Its subcellular location is the membrane. It catalyses the reaction L-seryl-[protein] + ATP = O-phospho-L-seryl-[protein] + ADP + H(+). The enzyme catalyses L-threonyl-[protein] + ATP = O-phospho-L-threonyl-[protein] + ADP + H(+). With respect to regulation, activated by calcium. Autophosphorylation may play an important role in the regulation of the kinase activity. Functionally, may play a role in signal transduction pathways that involve calcium as a second messenger. The polypeptide is Calcium-dependent protein kinase 24 (CPK24) (Arabidopsis thaliana (Mouse-ear cress)).